A 244-amino-acid polypeptide reads, in one-letter code: 1-(5-phosphoribosyl)-5-[(5-phosphoribosylamino)methylideneamino] imidazole-4-carboxamide isomerase (244 aa).

The Proton acceptor role is filled by aspartate 10. Residue aspartate 132 is the Proton donor of the active site.

The protein belongs to the HisA/HisF family.

It is found in the cytoplasm. The enzyme catalyses 1-(5-phospho-beta-D-ribosyl)-5-[(5-phospho-beta-D-ribosylamino)methylideneamino]imidazole-4-carboxamide = 5-[(5-phospho-1-deoxy-D-ribulos-1-ylimino)methylamino]-1-(5-phospho-beta-D-ribosyl)imidazole-4-carboxamide. The protein operates within amino-acid biosynthesis; L-histidine biosynthesis; L-histidine from 5-phospho-alpha-D-ribose 1-diphosphate: step 4/9. This chain is 1-(5-phosphoribosyl)-5-[(5-phosphoribosylamino)methylideneamino] imidazole-4-carboxamide isomerase, found in Xanthomonas euvesicatoria pv. vesicatoria (strain 85-10) (Xanthomonas campestris pv. vesicatoria).